The sequence spans 476 residues: Salicylate biosynthesis isochorismate synthase (476 aa).

Residues 181–202 form a disordered region; that stretch reads RRRPSGPTAGAQGDASAQERRQ.

This sequence belongs to the isochorismate synthase family.

The enzyme catalyses chorismate = isochorismate. Its pathway is siderophore biosynthesis; salicylate biosynthesis. In terms of biological role, involved in the conversion of chorismate to salicylate. In Pseudomonas aeruginosa (strain ATCC 15692 / DSM 22644 / CIP 104116 / JCM 14847 / LMG 12228 / 1C / PRS 101 / PAO1), this protein is Salicylate biosynthesis isochorismate synthase (pchA).